A 576-amino-acid chain; its full sequence is Proline--tRNA ligase (576 aa).

This sequence belongs to the class-II aminoacyl-tRNA synthetase family. ProS type 1 subfamily. As to quaternary structure, homodimer.

It localises to the cytoplasm. The catalysed reaction is tRNA(Pro) + L-proline + ATP = L-prolyl-tRNA(Pro) + AMP + diphosphate. In terms of biological role, catalyzes the attachment of proline to tRNA(Pro) in a two-step reaction: proline is first activated by ATP to form Pro-AMP and then transferred to the acceptor end of tRNA(Pro). As ProRS can inadvertently accommodate and process non-cognate amino acids such as alanine and cysteine, to avoid such errors it has two additional distinct editing activities against alanine. One activity is designated as 'pretransfer' editing and involves the tRNA(Pro)-independent hydrolysis of activated Ala-AMP. The other activity is designated 'posttransfer' editing and involves deacylation of mischarged Ala-tRNA(Pro). The misacylated Cys-tRNA(Pro) is not edited by ProRS. The chain is Proline--tRNA ligase from Leptospira borgpetersenii serovar Hardjo-bovis (strain L550).